A 209-amino-acid polypeptide reads, in one-letter code: Max dimerization protein 4 (209 aa).

The interaction with SIN3A and SIN3B stretch occupies residues 6 to 23 (LLILLEAAEYLERRDREA). In terms of domain architecture, bHLH spans 53–105 (NNRSSHNELEKHRRAKLRLYLEQLKQLVPLGPDSTRHTTLSLLKRAKVHIKKL). The disordered stretch occupies residues 140–209 (RVRTDSTGSA…CRRLGRPALS (70 aa)). The segment covering 153-163 (DDSEQEVDIEG) has biased composition (acidic residues). Over residues 199–209 (HCRRLGRPALS) the composition is skewed to basic residues.

As to quaternary structure, efficient DNA binding requires dimerization with another bHLH protein. Binds DNA as a heterodimer with MAX. Interacts with SIN3A AND SIN3B. Interacts with RNF17.

The protein resides in the nucleus. In terms of biological role, transcriptional repressor. Binds with MAX to form a sequence-specific DNA-binding protein complex which recognizes the core sequence 5'-CAC[GA]TG-3'. Antagonizes MYC transcriptional activity by competing for MAX and suppresses MYC dependent cell transformation. The protein is Max dimerization protein 4 (MXD4) of Homo sapiens (Human).